A 463-amino-acid chain; its full sequence is NADH dehydrogenase [ubiquinone] iron-sulfur protein 2, mitochondrial (463 aa).

The N-terminal 33 residues, 1-33 (MAALRALCGFRGVAAQVLRPGAGVRLPIQPSRG), are a transit peptide targeting the mitochondrion. Lys62 is modified (N6-acetyllysine). Arg118 is subject to Symmetric dimethylarginine. [4Fe-4S] cluster is bound by residues Cys326, Cys332, and Cys347.

The protein belongs to the complex I 49 kDa subunit family. Core subunit of respiratory chain NADH dehydrogenase (Complex I) which is composed of 45 different subunits. Component of the iron-sulfur (IP) fragment of the enzyme. Interacts with NDUFAF3. Interacts with NDUFAF7. Interacts with CERS2. Requires [4Fe-4S] cluster as cofactor. In terms of processing, dimethylation at Arg-118 by NDUFAF7 takes place after NDUFS2 assembles into the complex I, leading to stabilize the early intermediate complex.

It is found in the mitochondrion inner membrane. The catalysed reaction is a ubiquinone + NADH + 5 H(+)(in) = a ubiquinol + NAD(+) + 4 H(+)(out). Core subunit of the mitochondrial membrane respiratory chain NADH dehydrogenase (Complex I) which catalyzes electron transfer from NADH through the respiratory chain, using ubiquinone as an electron acceptor. Essential for the catalytic activity and assembly of complex I. Redox-sensitive, critical component of the oxygen-sensing pathway in the pulmonary vasculature which plays a key role in acute pulmonary oxygen-sensing and hypoxic pulmonary vasoconstriction. Plays an important role in carotid body sensing of hypoxia. Essential for glia-like neural stem and progenitor cell proliferation, differentiation and subsequent oligodendrocyte or neuronal maturation. In Pan troglodytes (Chimpanzee), this protein is NADH dehydrogenase [ubiquinone] iron-sulfur protein 2, mitochondrial (NDUFS2).